The sequence spans 2039 residues: Calcium-channel protein CCH1 (2039 aa).

Disordered stretches follow at residues 1–171 and 206–288; these read MQGR…PPRS and PQLK…PQKE. Positions 64-80 are enriched in basic and acidic residues; it reads STEEKKGDEYNGNDKDS. A glycan (N-linked (GlcNAc...) asparagine) is linked at N98. 2 stretches are compositionally biased toward low complexity: residues 122 to 132 and 147 to 164; these read SPSTKSAKSSS and FSSY…SPSS. The span at 209–226 shows a compositional bias: basic and acidic residues; the sequence is KSEKSRPVSDVGEDRGEG. N-linked (GlcNAc...) asparagine glycans are attached at residues N257 and N269. Residues 271 to 281 are compositionally biased toward basic residues; it reads SRKKPSPKFFH. Residue S284 is modified to Phosphoserine. Residues 346–366 traverse the membrane as a helical segment; sequence YSLLYNTLLTFYAILLAIRTY. Residue N379 is glycosylated (N-linked (GlcNAc...) asparagine). The helical transmembrane segment at 384-404 threads the bilayer; that stretch reads FIFILSACFTGNDIAKIIAFG. N-linked (GlcNAc...) asparagine glycosylation occurs at N559. 3 consecutive transmembrane segments (helical) span residues 563-583, 658-678, and 691-711; these read MLVY…QGSF, IVNS…TDLM, and LFFI…LIAV. N754 and N760 each carry an N-linked (GlcNAc...) asparagine glycan. A run of 3 helical transmembrane segments spans residues 766-786, 809-829, and 841-861; these read LAIY…DIGM, ISIV…PNMW, and FIIS…VLGH. N-linked (GlcNAc...) asparagine glycans are attached at residues N882 and N900. The next 2 membrane-spanning stretches (helical) occupy residues 904-924 and 942-962; these read FYFF…EGVI and SFLS…LYAL. N-linked (GlcNAc...) asparagine glycosylation is present at N968. A helical membrane pass occupies residues 978 to 998; that stretch reads FFIIWFLLSNSVILNIFIALI. An N-linked (GlcNAc...) asparagine glycan is attached at N1153. The helical transmembrane segment at 1207-1227 threads the bilayer; it reads VFVFIFALATILLIVCSCYVT. Residue N1240 is glycosylated (N-linked (GlcNAc...) asparagine). Helical transmembrane passes span 1247 to 1267 and 1277 to 1297; these read CAFI…DGFI and PWNF…IAYL. N-linked (GlcNAc...) asparagine glycosylation is present at N1302. The next 2 helical transmembrane spans lie at 1340-1360 and 1408-1428; these read IFEA…WGLS and FASA…VDLL. N1433 carries N-linked (GlcNAc...) asparagine glycosylation. The next 5 helical transmembrane spans lie at 1452 to 1472, 1529 to 1549, 1554 to 1574, 1596 to 1616, and 1618 to 1638; these read FLVL…VSFI, NFYY…MLLS, PGNL…VFLI, IRLS…HVPA, and HYWF…FIIP. N-linked (GlcNAc...) asparagine glycosylation is present at N1640. Residues 1654-1674 form a helical membrane-spanning segment; that stretch reads LPPILSLTYTWGVLFLVYAIA. Residues N1687 and N1732 are each glycosylated (N-linked (GlcNAc...) asparagine). The helical transmembrane segment at 1748-1768 threads the bilayer; it reads LMSWNIISMYIFVNMFVSLII. N-linked (GlcNAc...) asparagine glycosylation is found at N1770 and N1785. Residues 1787 to 1822 form the EF-hand domain; that stretch reads SEIKKYIEAWSKFDTDGTGELELSYLPRIMHSFDGP. A disordered region spans residues 2011–2039; sequence PRMNQDSTMEPPEEPIDNNDDSANDLIDR. Acidic residues predominate over residues 2021 to 2033; sequence PPEEPIDNNDDSA.

This sequence belongs to the calcium channel alpha-1 subunit (TC 1.A.1.11) family. In terms of assembly, interacts with MID1 to form a Ca(2+) influx channel.

The protein localises to the cell membrane. Functionally, voltage-gated, high-affinity calcium channel that functions together with MID1 to mediate calcium entry into cells. Required during conditions of environmental stress. The protein is Calcium-channel protein CCH1 (CCH1) of Saccharomyces cerevisiae (strain ATCC 204508 / S288c) (Baker's yeast).